The following is a 165-amino-acid chain: MRIDPSTLDLKEKVVSISRVTKVVKGGRNFRFSALVVVGDENGHVGVGTGKSIEIPEAIRKGIEDAKKNLVEVSIVGTTVPHEIHGKFGTGDVLIMPATEGTGVIAGGPARSVLELAGLKDVRAKSLGSNNPRNMVKATINGLANLRTAEDIAKLRGKSVEEIIG.

Residues 10–73 form the S5 DRBM domain; it reads LKEKVVSISR…EDAKKNLVEV (64 aa).

It belongs to the universal ribosomal protein uS5 family. As to quaternary structure, part of the 30S ribosomal subunit. Contacts proteins S4 and S8.

With S4 and S12 plays an important role in translational accuracy. Its function is as follows. Located at the back of the 30S subunit body where it stabilizes the conformation of the head with respect to the body. The chain is Small ribosomal subunit protein uS5 from Clostridium perfringens (strain ATCC 13124 / DSM 756 / JCM 1290 / NCIMB 6125 / NCTC 8237 / Type A).